Reading from the N-terminus, the 488-residue chain is Dipeptide and tripeptide permease B (488 aa).

Residues 1–27 (MSKTASVGLWDQPKPFFMIFFVELWER) are Cytoplasmic-facing. The helical transmembrane segment at 28 to 48 (FGFYGVQGILAIYFVQQLGFS) threads the bilayer. Over 49-52 (EEQS) the chain is Periplasmic. Residues 53 to 73 (FITFGAFTALVYGLISVGGYV) form a helical membrane-spanning segment. The Cytoplasmic segment spans residues 74 to 82 (GDHILGTKR). A helical transmembrane segment spans residues 83 to 103 (TIVLGAIVMAIGYYMIGLSIM). The Periplasmic segment spans residues 104 to 106 (KPE). The chain crosses the membrane as a helical span at residues 107–127 (LIFYALGTVAVGNGLFKANPA). Over 128 to 146 (SLLAKCYQPQDPRLDGAFT) the chain is Cytoplasmic. The helical transmembrane segment at 147 to 167 (LFYMSINLGSLFSLSLAPVIA) threads the bilayer. Residues 168-172 (EKYGY) are Periplasmic-facing. A helical transmembrane segment spans residues 173–193 (TVTYNICGIGLIIALLVYIAC). At 194-211 (RRMVHNIGSAPDHHPVKP) the chain is on the cytoplasmic side. A helical membrane pass occupies residues 212–232 (IGLIAVLIGSVVMVGVCAWLL). The Periplasmic portion of the chain corresponds to 233–234 (HN). The chain crosses the membrane as a helical span at residues 235-255 (IKVANIALFAITTIVVLIFFW). The Cytoplasmic segment spans residues 256–267 (QAFKQNRVGRNK). Residues 268–288 (MFVAFILMLQAVVFFILYNQM) traverse the membrane as a helical segment. Residues 289–311 (PMSLNFFAINNVHHQILGFDVNP) lie on the Periplasmic side of the membrane. Residues 312-332 (VSFQAFNPFWIIIVSPILAVV) form a helical membrane-spanning segment. At 333–348 (YTKLGAKGKDFSMPAK) the chain is on the cytoplasmic side. The helical transmembrane segment at 349–369 (FTFGMFLCSLGFLTAAASGLF) threads the bilayer. At 370-378 (ADAQGITSP) the chain is on the periplasmic side. The chain crosses the membrane as a helical span at residues 379 to 399 (WFIVLVYLFQSVGELMISALG). Residues 400–423 (LAMVAAFVPSYLTGFILGMWFLSQ) are Cytoplasmic-facing. A helical transmembrane segment spans residues 424–444 (AVASMLASHVAALTATPVGVT). Residues 445 to 455 (DPLQTLPIYMS) are Periplasmic-facing. A helical transmembrane segment spans residues 456–476 (VFGKIGVATLIVAIIMTFMVP). Topologically, residues 477–488 (WLNRIMREEVKA) are cytoplasmic.

It belongs to the major facilitator superfamily. Proton-dependent oligopeptide transporter (POT/PTR) (TC 2.A.17) family. DtpB subfamily.

Its subcellular location is the cell inner membrane. Proton-dependent permease that transports di- and tripeptides. This Xenorhabdus bovienii (strain SS-2004) (Xenorhabdus nematophila subsp. bovienii) protein is Dipeptide and tripeptide permease B.